Here is a 37-residue protein sequence, read N- to C-terminus: Dolichyl-diphosphooligosaccharide--protein glycosyltransferase subunit 4A (37 aa).

The Lumenal segment spans residues 1 to 7; the sequence is MIDDQDL. A helical membrane pass occupies residues 8–28; it reads GFIANFLGIFIFALVIAYHYV. Residues 29 to 37 are Cytoplasmic-facing; it reads TADPKYEAT.

The protein belongs to the OST4 family. Component of the oligosaccharyltransferase (OST) complex.

Its subcellular location is the endoplasmic reticulum membrane. Functionally, subunit of the oligosaccharyl transferase (OST) complex that catalyzes the initial transfer of a defined glycan (Glc(3)Man(9)GlcNAc(2) in eukaryotes) from the lipid carrier dolichol-pyrophosphate to an asparagine residue within an Asn-X-Ser/Thr consensus motif in nascent polypeptide chains, the first step in protein N-glycosylation. N-glycosylation occurs cotranslationally and the complex associates with the Sec61 complex at the channel-forming translocon complex that mediates protein translocation across the endoplasmic reticulum (ER). All subunits are required for a maximal enzyme activity. The polypeptide is Dolichyl-diphosphooligosaccharide--protein glycosyltransferase subunit 4A (OST4A) (Arabidopsis thaliana (Mouse-ear cress)).